A 141-amino-acid polypeptide reads, in one-letter code: Hemoglobin subunit alpha (141 aa).

The region spanning 1–141 (VLSPADKTNI…VSTVLTSKYR (141 aa)) is the Globin domain. Phosphoserine is present on serine 3. Position 7 is an N6-succinyllysine (lysine 7). The residue at position 8 (threonine 8) is a Phosphothreonine. Position 11 is an N6-succinyllysine (lysine 11). The residue at position 16 (lysine 16) is an N6-acetyllysine; alternate. Position 16 is an N6-succinyllysine; alternate (lysine 16). Tyrosine 24 bears the Phosphotyrosine mark. The residue at position 35 (serine 35) is a Phosphoserine. Lysine 40 bears the N6-succinyllysine mark. Serine 49 is subject to Phosphoserine. Histidine 58 serves as a coordination point for O2. Histidine 87 lines the heme b pocket. Serine 102 bears the Phosphoserine mark. Threonine 108 bears the Phosphothreonine mark. At serine 124 the chain carries Phosphoserine. 2 positions are modified to phosphothreonine: threonine 134 and threonine 137. Position 138 is a phosphoserine (serine 138).

Belongs to the globin family. In terms of assembly, heterotetramer of two alpha chains and two beta chains. Red blood cells.

In terms of biological role, involved in oxygen transport from the lung to the various peripheral tissues. Hemopressin acts as an antagonist peptide of the cannabinoid receptor CNR1. Hemopressin-binding efficiently blocks cannabinoid receptor CNR1 and subsequent signaling. The polypeptide is Hemoglobin subunit alpha (HBA) (Chrysocyon brachyurus (Maned wolf)).